A 363-amino-acid polypeptide reads, in one-letter code: Small ribosomal subunit biogenesis GTPase RsgA (363 aa).

Residues 112–268 enclose the CP-type G domain; it reads HQQVIAANID…LIDTPGMREL (157 aa). Residues 157 to 160 and 210 to 218 contribute to the GTP site; these read TKAD and GSSGAGKST. Zn(2+) is bound by residues Cys-291, Cys-296, His-298, and Cys-304. A disordered region spans residues 340–363; sequence RVAQNNRGKGSGKRPASIDRPGRR.

Belongs to the TRAFAC class YlqF/YawG GTPase family. RsgA subfamily. Monomer. Associates with 30S ribosomal subunit, binds 16S rRNA. The cofactor is Zn(2+).

The protein resides in the cytoplasm. Its function is as follows. One of several proteins that assist in the late maturation steps of the functional core of the 30S ribosomal subunit. Helps release RbfA from mature subunits. May play a role in the assembly of ribosomal proteins into the subunit. Circularly permuted GTPase that catalyzes slow GTP hydrolysis, GTPase activity is stimulated by the 30S ribosomal subunit. This Xanthomonas oryzae pv. oryzae (strain PXO99A) protein is Small ribosomal subunit biogenesis GTPase RsgA.